The following is a 1531-amino-acid chain: Probable outer membrane protein PmpD (1531 aa).

A signal peptide spans 1–20 (MSSEKDIKSTCSKFSLSVVA). Residues 1244–1531 (EFDYSTNVWG…EANTGLRLIF (288 aa)) form the Autotransporter domain.

This sequence belongs to the PMP outer membrane protein family.

It is found in the secreted. Its subcellular location is the cell wall. The protein resides in the cell outer membrane. This chain is Probable outer membrane protein PmpD (pmpD), found in Chlamydia trachomatis serovar D (strain ATCC VR-885 / DSM 19411 / UW-3/Cx).